We begin with the raw amino-acid sequence, 449 residues long: MFLEIPRWLLALIILYLSIPLVVYYVIPYLFYGNKSTKKRIIIFVLGDVGHSPRICYHAISFSKLGWQVELCGYVEDTLPKIISSDPNITVHHMSNLKRKGGGTSVIFMVKKVLFQVLSIFKLLWELRGSDYILVQNPPSIPILPIAVLYKLTGCKLIIDWHNLAYSILQLKFKGNFYHPLVLISYMVEMIFSKFADYNLTVTEAMRKYLIQSFHLNPKRCAVLYDRPASQFQPLAGDISRQKALTTKAFIKNYIRDDFDTEKGDKIIVTSTSFTPDEDIGILLGALKIYENSYVKFDSSLPKILCFITGKGPLKEKYMKQVEEYDWKRCQIEFVWLSAEDYPKLLQLCDYGVSLHTSSSGLDLPMKILDMFGSGLPVIAMNYPVLDELVQHNVNGLKFVDRRELHESLIFAMKDADLYQKLKKNVTQEAENRWQSNWERTMRDLKLIH.

Over 1–7 (MFLEIPR) the chain is Lumenal. A helical membrane pass occupies residues 8–28 (WLLALIILYLSIPLVVYYVIP). The Dolichol recognition motif lies at 21-32 (LVVYYVIPYLFY). The Cytoplasmic portion of the chain corresponds to 29–104 (YLFYGNKSTK…SNLKRKGGGT (76 aa)). An intramembrane region (helical) is located at residues 105–125 (SVIFMVKKVLFQVLSIFKLLW). The Cytoplasmic segment spans residues 126–449 (ELRGSDYILV…RTMRDLKLIH (324 aa)). The required for oligomerization stretch occupies residues 435–449 (QSNWERTMRDLKLIH).

Belongs to the glycosyltransferase group 1 family. Glycosyltransferase 33 subfamily. As to quaternary structure, homodimer. ALG1 forms mannosyltransferases (MT) heteromeric complexes with either ALG2 or ALG11.

It is found in the endoplasmic reticulum membrane. The catalysed reaction is an N,N'-diacetylchitobiosyl-diphospho-di-trans,poly-cis-dolichol + GDP-alpha-D-mannose = a beta-D-Man-(1-&gt;4)-beta-D-GlcNAc-(1-&gt;4)-alpha-D-GlcNAc-diphospho-di-trans,poly-cis-dolichol + GDP + H(+). It functions in the pathway protein modification; protein glycosylation. Functionally, participates in the formation of the lipid-linked precursor oligosaccharide for N-glycosylation. Involved in assembling the dolichol-pyrophosphate-GlcNAc(2)-Man(5) intermediate on the cytoplasmic surface of the ER. This chain is Chitobiosyldiphosphodolichol beta-mannosyltransferase (ALG1), found in Saccharomyces cerevisiae (strain ATCC 204508 / S288c) (Baker's yeast).